A 193-amino-acid polypeptide reads, in one-letter code: MKVIGISGSPRPEGNTTLLVREALNAIAEEGIETEFISLADKELNPCIGCNMCKEEGKCPIIDDVDEILKKMKEADGIILGSPVYFGGVSAQLKMLMDRSRPLRIGFQLRNKVGGAVAVGASRNGGQETTIQQIHNFFLIHSMIVVGDNDPTAHYGGTGVGKAPGDCKNDDIGLETARNLGKKVAEVVKLIKK.

4 residues coordinate [4Fe-4S] cluster: Cys-47, Cys-50, Cys-53, and Cys-59.

It belongs to the SsuE family. Isf subfamily. As to quaternary structure, homodimer. It depends on FMN as a cofactor. The cofactor is [4Fe-4S] cluster.

Functionally, redox-active protein probably involved in electron transport. The sequence is that of Iron-sulfur flavoprotein MJ1083 from Methanocaldococcus jannaschii (strain ATCC 43067 / DSM 2661 / JAL-1 / JCM 10045 / NBRC 100440) (Methanococcus jannaschii).